The primary structure comprises 641 residues: FAD-binding monooxygenase ausB (641 aa).

The tract at residues 1–68 is disordered; it reads MAIGPKPESI…DSTTNVPYSL (68 aa). The span at 49–68 shows a compositional bias: polar residues; that stretch reads WLTSTDQPQPDSTTNVPYSL. Residues 115–118, 127–128, and Tyr133 contribute to the FAD site; these read TWYW and DI. 125–127 contributes to the NADP(+) binding site; it reads MCD. Residues 272–278 and 295–296 each bind NADP(+); these read TGSTAVQ and RT.

Belongs to the FAD-binding monooxygenase family. It depends on FAD as a cofactor.

It carries out the reaction protoaustinoid A + AH2 + O2 = berkeleyone A + A + H2O. It functions in the pathway secondary metabolite biosynthesis; terpenoid biosynthesis. FAD-binding monooxygenase; part of the gene cluster A that mediates the biosynthesis of the fungal meroterpenoid acetoxydehydroaustin. The first step of the pathway is the synthesis of 3,5-dimethylorsellinic acid by the polyketide synthase ausA. 3,5-dimethylorsellinic acid is then prenylated by the polyprenyl transferase ausN. Further epoxidation by the FAD-dependent monooxygenase ausM and cyclization by the probable terpene cyclase ausL lead to the formation of protoaustinoid A. Protoaustinoid A is then oxidized to spiro-lactone preaustinoid A3 by the combined action of the FAD-binding monooxygenases ausB and ausC, and the dioxygenase ausE. Acid-catalyzed keto-rearrangement and ring contraction of the tetraketide portion of preaustinoid A3 by ausJ lead to the formation of preaustinoid A4. The aldo-keto reductase ausK, with the help of ausH, is involved in the next step by transforming preaustinoid A4 into isoaustinone which is in turn hydroxylated by the P450 monooxygenase ausI to form austinolide. The cytochrome P450 monooxygenase ausG then modifies austinolide to austinol. Austinol is further acetylated to austin by the O-acetyltransferase ausP, which spontaneously changes to dehydroaustin. The cytochrome P450 monooxygenase then converts dehydroaustin is into 7-dehydrodehydroaustin. The hydroxylation catalyzed by ausR permits the second O-acetyltransferase ausQ to add an additional acetyl group to the molecule, leading to the formation of acetoxydehydroaustin. Due to genetic rearrangements of the clusters and the subsequent loss of some enzymes, the end product of the Penicillium brasilianum austinoid biosynthesis clusters is acetoxydehydroaustin. The polypeptide is FAD-binding monooxygenase ausB (Penicillium brasilianum).